The primary structure comprises 777 residues: Phosphoribosylformylglycinamidine synthase subunit PurL (777 aa).

Residue H50 is part of the active site. Residues Y53 and K92 each coordinate ATP. E94 provides a ligand contact to Mg(2+). Substrate is bound by residues S95–H98 and R117. Catalysis depends on H96, which acts as the Proton acceptor. D118 is a Mg(2+) binding site. Q241 is a substrate binding site. A Mg(2+)-binding site is contributed by D269. E313–Q315 lines the substrate pocket. ATP contacts are provided by D520 and G557. Residue N558 coordinates Mg(2+). S560 contacts substrate.

Belongs to the FGAMS family. As to quaternary structure, monomer. Part of the FGAM synthase complex composed of 1 PurL, 1 PurQ and 2 PurS subunits.

The protein localises to the cytoplasm. The enzyme catalyses N(2)-formyl-N(1)-(5-phospho-beta-D-ribosyl)glycinamide + L-glutamine + ATP + H2O = 2-formamido-N(1)-(5-O-phospho-beta-D-ribosyl)acetamidine + L-glutamate + ADP + phosphate + H(+). The protein operates within purine metabolism; IMP biosynthesis via de novo pathway; 5-amino-1-(5-phospho-D-ribosyl)imidazole from N(2)-formyl-N(1)-(5-phospho-D-ribosyl)glycinamide: step 1/2. Functionally, part of the phosphoribosylformylglycinamidine synthase complex involved in the purines biosynthetic pathway. Catalyzes the ATP-dependent conversion of formylglycinamide ribonucleotide (FGAR) and glutamine to yield formylglycinamidine ribonucleotide (FGAM) and glutamate. The FGAM synthase complex is composed of three subunits. PurQ produces an ammonia molecule by converting glutamine to glutamate. PurL transfers the ammonia molecule to FGAR to form FGAM in an ATP-dependent manner. PurS interacts with PurQ and PurL and is thought to assist in the transfer of the ammonia molecule from PurQ to PurL. The protein is Phosphoribosylformylglycinamidine synthase subunit PurL of Trichormus variabilis (strain ATCC 29413 / PCC 7937) (Anabaena variabilis).